An 89-amino-acid chain; its full sequence is Small ribosomal subunit protein uS15 (89 aa).

The segment covering 1–10 (MSITAERKAE) has biased composition (basic and acidic residues). The interval 1–24 (MSITAERKAEVIQGNANKAGDTGS) is disordered.

Belongs to the universal ribosomal protein uS15 family. In terms of assembly, part of the 30S ribosomal subunit. Forms a bridge to the 50S subunit in the 70S ribosome, contacting the 23S rRNA.

Its function is as follows. One of the primary rRNA binding proteins, it binds directly to 16S rRNA where it helps nucleate assembly of the platform of the 30S subunit by binding and bridging several RNA helices of the 16S rRNA. In terms of biological role, forms an intersubunit bridge (bridge B4) with the 23S rRNA of the 50S subunit in the ribosome. The chain is Small ribosomal subunit protein uS15 from Rhodopseudomonas palustris (strain BisB5).